The primary structure comprises 437 residues: GTPase Der (437 aa).

EngA-type G domains lie at 3–168 (PLIA…PVQE) and 178–353 (TNLA…ENRS). GTP is bound by residues 9–16 (GRPNVGKS), 56–60 (DTGGY), 120–123 (NKVE), 184–191 (GRPNVGKS), 231–235 (DTAGL), and 296–299 (NKWD). One can recognise a KH-like domain in the interval 354 to 437 (RKITTSALNR…VTVSLRFFKK (84 aa)).

Belongs to the TRAFAC class TrmE-Era-EngA-EngB-Septin-like GTPase superfamily. EngA (Der) GTPase family. As to quaternary structure, associates with the 50S ribosomal subunit.

GTPase that plays an essential role in the late steps of ribosome biogenesis. The polypeptide is GTPase Der (Chlorobium phaeobacteroides (strain DSM 266 / SMG 266 / 2430)).